The primary structure comprises 192 residues: uncharacterized protein (192 aa).

To A.aeolicus AQ_054.

This is an uncharacterized protein from Thermotoga maritima (strain ATCC 43589 / DSM 3109 / JCM 10099 / NBRC 100826 / MSB8).